The following is a 62-amino-acid chain: U-stichotoxin-Hau1a (62 aa).

A signal peptide spans Met-1–Gly-21. Residues Phe-22–Arg-31 constitute a propeptide that is removed on maturation. Residue Pro-36 is modified to Hydroxyproline. 2 cysteine pairs are disulfide-bonded: Cys-41–Cys-53 and Cys-44–Cys-59.

Belongs to the Hau1a/HC18/HC19 family.

It is found in the secreted. Its subcellular location is the nematocyst. Toxin that is lethal to crab. Does not produce the typical symptoms associated with sodium channel toxins in crabs, suggesting that it likely does not act on sodium channels. This Heteractis aurora (Banded sea anemone) protein is U-stichotoxin-Hau1a.